The primary structure comprises 225 residues: Pathogenesis-related thaumatin-like protein 3.8 (225 aa).

The signal sequence occupies residues 1 to 26 (MAKVSDLALLLVAGMAISLYIQETGA). 8 disulfide bridges follow: Cys35–Cys224, Cys76–Cys86, Cys91–Cys97, Cys139–Cys213, Cys144–Cys197, Cys152–Cys162, Cys166–Cys175, and Cys176–Cys184. N-linked (GlcNAc...) asparagine glycosylation is present at Asn188.

It belongs to the thaumatin family.

May be involved in disease resistance. The sequence is that of Pathogenesis-related thaumatin-like protein 3.8 from Cryptomeria japonica (Japanese cedar).